The chain runs to 251 residues: MNLNSIPAFDDNYIWVLNDEAGRCLIVDPGDAEPVLNAIAANNWQPEAIFLTHHHHDHVGGVKELVEKFPQIVVYGPQETQDKGTTQVVKDGETAFVLGHEFSVIATPGHTLGHICYFSKPYLFCGDTLFSGGCGRLFEGTASQMYQSLKKLSALPDDTLVCCAHEYTLSNMEFALSILPHDLSINDYYRKVKELRAKNQITQPVILKNERQINVFLRTEHIDLINVINEETLLQQPDERFAWLRSKKDRF.

7 residues coordinate Zn(2+): His-53, His-55, Asp-57, His-58, His-110, Asp-127, and His-165.

The protein belongs to the metallo-beta-lactamase superfamily. Glyoxalase II family. In terms of assembly, monomer. Zn(2+) serves as cofactor.

It carries out the reaction an S-(2-hydroxyacyl)glutathione + H2O = a 2-hydroxy carboxylate + glutathione + H(+). Its pathway is secondary metabolite metabolism; methylglyoxal degradation; (R)-lactate from methylglyoxal: step 2/2. In terms of biological role, thiolesterase that catalyzes the hydrolysis of S-D-lactoyl-glutathione to form glutathione and D-lactic acid. In Shigella dysenteriae serotype 1 (strain Sd197), this protein is Hydroxyacylglutathione hydrolase.